The primary structure comprises 449 residues: Glucose-6-phosphate isomerase (449 aa).

Glu-291 acts as the Proton donor in catalysis. Active-site residues include His-312 and Lys-426.

Belongs to the GPI family.

Its subcellular location is the cytoplasm. The catalysed reaction is alpha-D-glucose 6-phosphate = beta-D-fructose 6-phosphate. It participates in carbohydrate biosynthesis; gluconeogenesis. Its pathway is carbohydrate degradation; glycolysis; D-glyceraldehyde 3-phosphate and glycerone phosphate from D-glucose: step 2/4. Catalyzes the reversible isomerization of glucose-6-phosphate to fructose-6-phosphate. The protein is Glucose-6-phosphate isomerase of Streptococcus mutans serotype c (strain ATCC 700610 / UA159).